The chain runs to 558 residues: Cytochrome c oxidase subunit 1-beta (558 aa).

The Cytoplasmic segment spans residues 1–28 (MADAAVHGHGDHHDTRGFFTRWFMSTNH). The helical transmembrane segment at 29–59 (KDIGILYLFTAGIVGLISVCFTVYMRMELQH) threads the bilayer. At 60-82 (PGVQYMCLEGARLIADASAECTP) the chain is on the periplasmic side. The cysteines at positions 66 and 80 are disulfide-linked. The helical transmembrane segment at 83 to 120 (NGHLWNVMITYHGVLMMFFVVIPALFGGFGNYFMPLHI) threads the bilayer. His94 contributes to the Fe(II)-heme a binding site. Residues 121-126 (GAPDMA) lie on the Cytoplasmic side of the membrane. A helical transmembrane segment spans residues 127 to 151 (FPRLNNLSYWMYVCGVALGVASLLA). The Periplasmic segment spans residues 152–176 (PGGNDQMGSGVGWVLYPPLSTTEAG). Residues 177 to 206 (YSMDLAIFAVHVSGASSILGAINIITTFLN) traverse the membrane as a helical segment. Residues 207–217 (MRAPGMTLFKV) lie on the Cytoplasmic side of the membrane. A helical membrane pass occupies residues 218–251 (PLFAWSVFITAWLILLSLPVLAGAITMLLMDRNF). Residues 252–262 (GTQFFDPAGGG) are Periplasmic-facing. The helical transmembrane segment at 263–299 (DPVLYQHILWFFGHPEVYIIILPGFGIISHVISTFAK) threads the bilayer. Positions 276 and 280 each coordinate Cu cation. The segment at residues 276–280 (HPEVY) is a cross-link (1'-histidyl-3'-tyrosine (His-Tyr)). Residues 300–303 (KPIF) are Cytoplasmic-facing. A helical membrane pass occupies residues 304–331 (GYLPMVLAMAAIGILGFVVWAHHMYTAG). Residues His325 and His326 each contribute to the Cu cation site. A topological domain (periplasmic) is located at residue Met332. A helical membrane pass occupies residues 333-364 (SLTQQAYFMLATMTIAVPTGIKVFSWIATMWG). Residues 365–369 (GSIEF) are Cytoplasmic-facing. Residues 370-395 (KTPMLWAFGFLFLFTVGGVTGVVLSQ) traverse the membrane as a helical segment. Topologically, residues 396-404 (APLDRVYHD) are periplasmic. A helical membrane pass occupies residues 405 to 437 (TYYVVAHFHYVMSLGAVFGIFAGVYYWIGKMSG). His411 contacts heme a3. His413 serves as a coordination point for Fe(II)-heme a. Residues 438–440 (RQY) are Cytoplasmic-facing. Residues 441–469 (PEWAGQLHFWMMFIGSNLIFFPQHFLGRQ) form a helical membrane-spanning segment. Topologically, residues 470–478 (GMPRRYIDY) are periplasmic. A helical membrane pass occupies residues 479–514 (PVEFAYWNNISSIGAYISFASFLFFIGIVFYTLFAG). The Cytoplasmic portion of the chain corresponds to 515–558 (KRVNVPNYWNEHADTLEWTLPSPPPEHTFETLPKREDWDRAHAH).

Belongs to the heme-copper respiratory oxidase family. Cu(2+) serves as cofactor. The cofactor is heme. His-276 and Tyr-280 are involved in the formation of a copper-coordinated covalent cross-link at the active site of the catalytic subunit I.

The protein localises to the cell inner membrane. The catalysed reaction is 4 Fe(II)-[cytochrome c] + O2 + 8 H(+)(in) = 4 Fe(III)-[cytochrome c] + 2 H2O + 4 H(+)(out). The protein operates within energy metabolism; oxidative phosphorylation. Its function is as follows. Subunit I and II form the functional core of the enzyme complex. Electrons originating in cytochrome c are transferred via heme a and Cu(A) to the binuclear center formed by heme a3 and Cu(B). This cytochrome c oxidase shows proton pump activity across the membrane in addition to the electron transfer. The protein is Cytochrome c oxidase subunit 1-beta (ctaDII) of Paracoccus denitrificans.